Reading from the N-terminus, the 204-residue chain is Small ribosomal subunit protein uS4 (204 aa).

The region spanning 92–157 is the S4 RNA-binding domain; the sequence is RRLDALVLRS…KPLFEVAREG (66 aa).

Belongs to the universal ribosomal protein uS4 family. Part of the 30S ribosomal subunit. Contacts protein S5. The interaction surface between S4 and S5 is involved in control of translational fidelity.

Functionally, one of the primary rRNA binding proteins, it binds directly to 16S rRNA where it nucleates assembly of the body of the 30S subunit. With S5 and S12 plays an important role in translational accuracy. The protein is Small ribosomal subunit protein uS4 of Streptomyces avermitilis (strain ATCC 31267 / DSM 46492 / JCM 5070 / NBRC 14893 / NCIMB 12804 / NRRL 8165 / MA-4680).